The primary structure comprises 170 residues: Adenine phosphoribosyltransferase (170 aa).

This sequence belongs to the purine/pyrimidine phosphoribosyltransferase family. Homodimer.

The protein localises to the cytoplasm. It catalyses the reaction AMP + diphosphate = 5-phospho-alpha-D-ribose 1-diphosphate + adenine. Its pathway is purine metabolism; AMP biosynthesis via salvage pathway; AMP from adenine: step 1/1. In terms of biological role, catalyzes a salvage reaction resulting in the formation of AMP, that is energically less costly than de novo synthesis. The sequence is that of Adenine phosphoribosyltransferase from Pseudothermotoga lettingae (strain ATCC BAA-301 / DSM 14385 / NBRC 107922 / TMO) (Thermotoga lettingae).